A 145-amino-acid polypeptide reads, in one-letter code: Basic phospholipase A2 PC16 (145 aa).

Residues 1-21 (MYPAHLLLLLAVCVSLLGASA) form the signal peptide. A propeptide spanning residues 22-27 (IPPLPL) is cleaved from the precursor. Cystine bridges form between Cys-38-Cys-98, Cys-54-Cys-144, Cys-56-Cys-72, Cys-71-Cys-125, Cys-78-Cys-118, Cys-87-Cys-111, and Cys-105-Cys-116. Tyr-55, Gly-57, and Gly-59 together coordinate Ca(2+). Residue His-75 is part of the active site. Asp-76 contributes to the Ca(2+) binding site. Asp-119 is an active-site residue.

The protein belongs to the phospholipase A2 family. Group I subfamily. D49 sub-subfamily. Requires Ca(2+) as cofactor.

The protein resides in the secreted. The catalysed reaction is a 1,2-diacyl-sn-glycero-3-phosphocholine + H2O = a 1-acyl-sn-glycero-3-phosphocholine + a fatty acid + H(+). Its function is as follows. PLA2 catalyzes the calcium-dependent hydrolysis of the 2-acyl groups in 3-sn-phosphoglycerides. The protein is Basic phospholipase A2 PC16 of Laticauda laticaudata (Blue-ringed sea krait).